Here is a 1308-residue protein sequence, read N- to C-terminus: Transposon TX1 uncharacterized 149 kDa protein (1308 aa).

The Reverse transcriptase domain occupies 494–765 (EAFKKGELPL…KIIKYLGVYL (272 aa)).

The polypeptide is Transposon TX1 uncharacterized 149 kDa protein (Xenopus laevis (African clawed frog)).